Consider the following 456-residue polypeptide: tRNA modification GTPase MnmE (456 aa).

Residues Arg-24, Glu-81, and Lys-120 each coordinate (6S)-5-formyl-5,6,7,8-tetrahydrofolate. The region spanning 216 to 379 (GMTVVIAGRP…LREHLKACMG (164 aa)) is the TrmE-type G domain. Asn-226 is a binding site for K(+). Residues 226 to 231 (NAGKSS), 245 to 251 (TEIAGTT), 270 to 273 (DTAG), 335 to 338 (NKAD), and 359 to 361 (SAR) each bind GTP. A Mg(2+)-binding site is contributed by Ser-230. K(+) contacts are provided by Thr-245, Ile-247, and Thr-250. Thr-251 is a binding site for Mg(2+). Lys-456 is a binding site for (6S)-5-formyl-5,6,7,8-tetrahydrofolate.

Belongs to the TRAFAC class TrmE-Era-EngA-EngB-Septin-like GTPase superfamily. TrmE GTPase family. As to quaternary structure, homodimer. Heterotetramer of two MnmE and two MnmG subunits. The cofactor is K(+).

The protein resides in the cytoplasm. Exhibits a very high intrinsic GTPase hydrolysis rate. Involved in the addition of a carboxymethylaminomethyl (cmnm) group at the wobble position (U34) of certain tRNAs, forming tRNA-cmnm(5)s(2)U34. The protein is tRNA modification GTPase MnmE of Pseudomonas syringae pv. tomato (strain ATCC BAA-871 / DC3000).